The sequence spans 78 residues: Exodeoxyribonuclease 7 small subunit (78 aa).

It belongs to the XseB family. Heterooligomer composed of large and small subunits.

Its subcellular location is the cytoplasm. It carries out the reaction Exonucleolytic cleavage in either 5'- to 3'- or 3'- to 5'-direction to yield nucleoside 5'-phosphates.. Functionally, bidirectionally degrades single-stranded DNA into large acid-insoluble oligonucleotides, which are then degraded further into small acid-soluble oligonucleotides. This is Exodeoxyribonuclease 7 small subunit from Cutibacterium acnes (strain DSM 16379 / KPA171202) (Propionibacterium acnes).